Consider the following 695-residue polypeptide: Elongation factor G 1 (695 aa).

One can recognise a tr-type G domain in the interval 6-284; sequence KKVRNIGISA…VTRYLPCPAD (279 aa). GTP contacts are provided by residues 15–22, 82–86, and 136–139; these read AHIDSGKT, DTPGH, and NKCD.

It belongs to the TRAFAC class translation factor GTPase superfamily. Classic translation factor GTPase family. EF-G/EF-2 subfamily.

Its subcellular location is the cytoplasm. Functionally, catalyzes the GTP-dependent ribosomal translocation step during translation elongation. During this step, the ribosome changes from the pre-translocational (PRE) to the post-translocational (POST) state as the newly formed A-site-bound peptidyl-tRNA and P-site-bound deacylated tRNA move to the P and E sites, respectively. Catalyzes the coordinated movement of the two tRNA molecules, the mRNA and conformational changes in the ribosome. This is Elongation factor G 1 from Syntrophus aciditrophicus (strain SB).